A 644-amino-acid polypeptide reads, in one-letter code: Acetolactate synthase 1, chloroplastic (644 aa).

The N-terminal 43 residues, 1-43 (MATTAAAAAAALSAAATAKTGRKNHQRHHVLPARGRVGAAAVR), are a transit peptide targeting the chloroplast. The segment at 47–67 (VSPVTPPSPAPPATPLRPWGP) is disordered. The span at 50-61 (VTPPSPAPPATP) shows a compositional bias: pro residues. Residue glutamate 118 coordinates thiamine diphosphate. A disulfide bridge links cysteine 138 with cysteine 284. Residues arginine 220, 326 to 347 (HGTV…FGVR), and 369 to 388 (DIDP…ICAD) each bind FAD. Residues 461 to 541 (QHQMWAAQYY…VKVMVLNNQH (81 aa)) are thiamine pyrophosphate binding. Aspartate 512 and asparagine 539 together coordinate Mg(2+).

Belongs to the TPP enzyme family. The cofactor is Mg(2+). It depends on thiamine diphosphate as a cofactor.

It localises to the plastid. It is found in the chloroplast. The catalysed reaction is 2 pyruvate + H(+) = (2S)-2-acetolactate + CO2. It functions in the pathway amino-acid biosynthesis; L-isoleucine biosynthesis; L-isoleucine from 2-oxobutanoate: step 1/4. The protein operates within amino-acid biosynthesis; L-valine biosynthesis; L-valine from pyruvate: step 1/4. This is Acetolactate synthase 1, chloroplastic (ALS1) from Oryza sativa subsp. japonica (Rice).